The chain runs to 159 residues: Probable inactive acireductone dioxygenase 2 (159 aa).

It belongs to the acireductone dioxygenase (ARD) family.

The protein localises to the cytoplasm. It localises to the nucleus. Functionally, probable inactive acireductone dioxygenase. The polypeptide is Probable inactive acireductone dioxygenase 2 (Caenorhabditis briggsae).